Here is a 634-residue protein sequence, read N- to C-terminus: Sodium-dependent multivitamin transporter (634 aa).

12 helical membrane-spanning segments follow: residues 23–43 (FSVV…VIGL), 65–85 (MGCL…VAIL), 100–120 (FLGC…IPVF), 142–162 (ICGT…ALYA), 175–195 (LWLS…LGGL), 207–227 (LVMF…VGGL), 255–275 (FWTL…VNQA), 295–315 (AVFP…LVMF), 350–370 (LPGL…SSAF), 403–423 (FAYG…GSVL), 427–447 (LSIF…GLFF), and 455–475 (AIVG…GSIV). N-linked (GlcNAc...) asparagine glycosylation is found at N488 and N497. The chain crosses the membrane as a helical span at residues 526–546 (LWYSAHNSTTVIVVGLIVSLL).

This sequence belongs to the sodium:solute symporter (SSF) (TC 2.A.21) family. As to quaternary structure, interacts with PDZD11. In terms of tissue distribution, expressed in the intestinal mucosa, liver and kidney (at protein level). Expressed in the colon.

The protein localises to the cell membrane. It is found in the apical cell membrane. The enzyme catalyses biotin(out) + 2 Na(+)(out) = biotin(in) + 2 Na(+)(in). The catalysed reaction is (R)-pantothenate(out) + 2 Na(+)(out) = (R)-pantothenate(in) + 2 Na(+)(in). It carries out the reaction (R)-lipoate(out) + 2 Na(+)(out) = (R)-lipoate(in) + 2 Na(+)(in). It catalyses the reaction iodide(out) + 2 Na(+)(out) = iodide(in) + 2 Na(+)(in). In terms of biological role, sodium-dependent multivitamin transporter that mediates the electrogenic transport of pantothenate, biotin, lipoate and iodide. Functions as a Na(+)-coupled substrate symporter where the stoichiometry of Na(+):substrate is 2:1, creating an electrochemical Na(+) gradient used as driving force for substrate uptake. Required for biotin and pantothenate uptake in the intestine across the brush border membrane. Plays a role in the maintenance of intestinal mucosa integrity, by providing the gut mucosa with biotin. Contributes to the luminal uptake of biotin and pantothenate into the brain across the blood-brain barrier. The chain is Sodium-dependent multivitamin transporter from Mus musculus (Mouse).